Consider the following 160-residue polypeptide: Ribosomal RNA large subunit methyltransferase H (160 aa).

S-adenosyl-L-methionine contacts are provided by residues Leu76, Gly108, and 127 to 132; that span reads FGFMTW.

Belongs to the RNA methyltransferase RlmH family. Homodimer.

The protein localises to the cytoplasm. The catalysed reaction is pseudouridine(1915) in 23S rRNA + S-adenosyl-L-methionine = N(3)-methylpseudouridine(1915) in 23S rRNA + S-adenosyl-L-homocysteine + H(+). Its function is as follows. Specifically methylates the pseudouridine at position 1915 (m3Psi1915) in 23S rRNA. In Bartonella henselae (strain ATCC 49882 / DSM 28221 / CCUG 30454 / Houston 1) (Rochalimaea henselae), this protein is Ribosomal RNA large subunit methyltransferase H.